The following is a 2919-amino-acid chain: Cadherin EGF LAG seven-pass G-type receptor 2 (2919 aa).

An N-terminal signal peptide occupies residues 1–31; the sequence is MRSRAASAPLPTPLLPLLLLLLLLPPSPLLG. The Extracellular portion of the chain corresponds to 32–2380; that stretch reads DQVGPCRSLG…GEILPLKTLT (2349 aa). The tract at residues 156–194 is disordered; that stretch reads LRAGEGSPEESLGGRRKRNVNTAPQFQPPSYQATVPENQ. Positions 175-194 are enriched in polar residues; sequence VNTAPQFQPPSYQATVPENQ. 9 consecutive Cadherin domains span residues 182 to 289, 290 to 399, 400 to 505, 506 to 610, 611 to 712, 713 to 815, 816 to 921, 922 to 1023, and 1028 to 1146; these read QPPS…DPVF, EQQE…APQF, SEKR…APIF, VSTP…NPTF, TQPE…RPVF, QSSH…APQF, LRDS…PPVF, EQDE…PPVL, and ILFN…SPLL. Residues N486, N557, and N701 are each glycosylated (N-linked (GlcNAc...) asparagine). 4 N-linked (GlcNAc...) asparagine glycosylation sites follow: N1036, N1076, N1182, and N1212. The EGF-like 1; atypical domain occupies 1228–1286; sequence DDNICLREPCENYMRCVSVLRFDSSAPFIASSSVLFRPIHPVGGLRCRCPPGFTGDYCE. Residues 1288 to 1318 form the EGF-like 2; calcium-binding domain; the sequence is EVDLCYSRPCGPHGRCRSREGGYTCLCLDGY. Cystine bridges form between C1292–C1303, C1297–C1312, C1314–C1323, C1332–C1343, C1337–C1353, and C1355–C1365. The EGF-like 3; calcium-binding domain maps to 1328–1366; the sequence is HSGRCTPGVCKNGGTCVNLLVGGFKCDCPSGDFEKPFCQ. One can recognise a Laminin G-like 1 domain in the interval 1367–1571; sequence VTTRSFPARS…IANNGTVPGC (205 aa). 2 N-linked (GlcNAc...) asparagine glycosylation sites follow: N1501 and N1565. 4 disulfide bridges follow: C1545–C1571, C1578–C1589, C1583–C1598, and C1600–C1609. One can recognise an EGF-like 4; calcium-binding domain in the interval 1574-1610; sequence KKIVCDSSICHNGGTCVNQWNAFSCECPLGFGGKSCA. Residue N1591 is modified to (3R)-3-hydroxyasparagine. Positions 1614–1791 constitute a Laminin G-like 2 domain; the sequence is ANPQRFLGSS…GESINVEPGC (178 aa). The N-linked (GlcNAc...) asparagine glycan is linked to N1741. One can recognise an EGF-like 5; calcium-binding domain in the interval 1787 to 1829; it reads VEPGCSWPDPCDSNPCPTNSYCSNDWDSYSCSCVLGYYGDNCT. Cystine bridges form between C1791–C1802, C1797–C1817, C1819–C1828, C1832–C1843, C1837–C1855, C1857–C1866, C1887–C1899, C1889–C1906, C1908–C1921, C1924–C1936, C1926–C1943, C1945–C1954, and C1957–C1969. Residue N1827 is glycosylated (N-linked (GlcNAc...) asparagine). The 38-residue stretch at 1830–1867 folds into the EGF-like 6; calcium-binding domain; the sequence is NVCDLNPCEHQSVCTRKPNTPHGYICECLPNYLGPYCE. Residues 1883 to 1922 form the EGF-like 7; calcium-binding domain; sequence TCGPCNCDVSKGFDPDCNKTSGECHCKENHYRPPGSPTCL. An N-linked (GlcNAc...) asparagine glycan is attached at N1900. Positions 1924 to 1971 constitute a Laminin EGF-like domain; it reads CDCYPTGSLSRVCDPEDGQCPCKPGVIGRQCDRCDNPFAEVTTNGCEV. N2024, N2043, and N2061 each carry an N-linked (GlcNAc...) asparagine glycan. Positions 2199 to 2369 constitute a GAIN-B domain; sequence ETTVILPESV…AVLMDMSRRE (171 aa). The disordered stretch occupies residues 2216–2241; sequence VRSAGPGEAQETEELARRQRRHPELS. Cystine bridges form between C2319–C2351 and C2339–C2353. A GPS region spans residues 2319–2369; it reads CVFWNHSILVSGTGGWSARGCEVVFRNESHVSCQCNHMTSFAVLMDMSRRE. Residues N2323 and N2345 are each glycosylated (N-linked (GlcNAc...) asparagine). Residues 2381-2401 form a helical membrane-spanning segment; the sequence is YVALGVTLAALMLTFLFLTLL. Residues 2402-2413 are Cytoplasmic-facing; sequence RALRSNQHGIRR. The chain crosses the membrane as a helical span at residues 2414–2433; that stretch reads NLTAALGLAQLVFLLGINQA. Topologically, residues 2434–2438 are extracellular; it reads DLPFA. A helical membrane pass occupies residues 2439–2459; the sequence is CTVIAILLHFLYLCTFSWALL. Residues 2460–2480 are Cytoplasmic-facing; that stretch reads EALHLYRALTEVRDVNASPMR. Residues 2481-2501 form a helical membrane-spanning segment; that stretch reads FYYMLGWGVPAFITGLAVGLD. Over 2502–2518 the chain is Extracellular; that stretch reads PEGYGNPDFCWLSVYDT. Residues 2519 to 2539 traverse the membrane as a helical segment; sequence LIWSFAGPVAFAVSMSVFLYI. The Cytoplasmic segment spans residues 2540–2563; that stretch reads LSARASCAAQRQGFEKKGPVSGLR. The helical transmembrane segment at 2564–2584 threads the bilayer; it reads SSFTVLLLLSATWLLALLSVN. At 2585-2591 the chain is on the extracellular side; it reads SDTLLFH. The chain crosses the membrane as a helical span at residues 2592–2612; sequence YLFAACNCVQGPFIFLSYVVL. Residues 2613–2919 lie on the Cytoplasmic side of the membrane; that stretch reads SKEVRKALKF…SEFLFFNFLH (307 aa). Residues 2690–2884 are disordered; it reads LNPGQVPPGL…PPRPPPRQSL (195 aa). Acidic residues predominate over residues 2718-2730; it reads TDSDSDLSLEDDQ. The span at 2791–2800 shows a compositional bias: polar residues; the sequence is GTTTKENSGS. Over residues 2803–2815 the composition is skewed to basic and acidic residues; sequence LEERPRENGDALT. Residues 2857 to 2868 are compositionally biased toward low complexity; it reads GTGSSRGSSISE.

It belongs to the G-protein coupled receptor 2 family. LN-TM7 subfamily. In terms of assembly, heterodimer of 2 chains generated by proteolytic processing; the large extracellular N-terminal fragment and the membrane-bound C-terminal fragment predominantly remain associated and non-covalently linked. Post-translationally, the iron and 2-oxoglutarate dependent 3-hydroxylation of aspartate and asparagine is (R) stereospecific within EGF domains. In terms of processing, autoproteolytically processed at the GPS region of the GAIN-B domain; this cleavage modulates receptor activity. Expressed in the CNS and in the eye.

The protein localises to the cell membrane. Functionally, receptor that may have an important role in cell/cell signaling during nervous system formation. The sequence is that of Cadherin EGF LAG seven-pass G-type receptor 2 from Mus musculus (Mouse).